The primary structure comprises 128 residues: MTGSCCGSTFSSLSYGGGCCQPCCCRDPCCCRPVTCQTTVCRPVTCVPRCTRPICEPCRRPVCCDPCSLQEGCCRPITCCPSSCTAVVCRPCCWATTCCQPVSVQSPCCRPPCGQPTPCSTTCRTSSC.

Residues 5–112 (CCGSTFSSLS…SVQSPCCRPP (108 aa)) are 10 X 5 AA repeats of C-C-[CDPQRWG]-[APRS]-[CIPSTVD].

The protein belongs to the KRTAP type 2 family. As to quaternary structure, interacts with hair keratins.

In terms of biological role, in the hair cortex, hair keratin intermediate filaments are embedded in an interfilamentous matrix, consisting of hair keratin-associated proteins (KRTAP), which are essential for the formation of a rigid and resistant hair shaft through their extensive disulfide bond cross-linking with abundant cysteine residues of hair keratins. The matrix proteins include the high-sulfur and high-glycine-tyrosine keratins. In Homo sapiens (Human), this protein is Keratin-associated protein 2-1 (KRTAP2-1).